Consider the following 464-residue polypeptide: Asparagine--tRNA ligase (464 aa).

Belongs to the class-II aminoacyl-tRNA synthetase family. As to quaternary structure, homodimer.

Its subcellular location is the cytoplasm. The catalysed reaction is tRNA(Asn) + L-asparagine + ATP = L-asparaginyl-tRNA(Asn) + AMP + diphosphate + H(+). The chain is Asparagine--tRNA ligase from Xanthomonas euvesicatoria pv. vesicatoria (strain 85-10) (Xanthomonas campestris pv. vesicatoria).